Here is a 951-residue protein sequence, read N- to C-terminus: Serine/threonine-protein kinase 10 (951 aa).

A Protein kinase domain is found at 36–294; that stretch reads WEIIGELGDG…AAQLLEHPFV (259 aa). Residues 42-50 and Lys65 each bind ATP; that span reads LGDGAFGKV. Asp157 serves as the catalytic Proton acceptor. A compositionally biased stretch (acidic residues) spans 319–330; the sequence is EENGEVEEEEAS. A disordered region spans residues 319 to 479; that stretch reads EENGEVEEEE…DSGSNSASES (161 aa). Residues 331–343 show a composition bias toward polar residues; that stretch reads DTPSSNKSVSQSA. Residues 345–356 show a composition bias toward basic and acidic residues; sequence GEKDKHTGKEHV. A compositionally biased stretch (polar residues) spans 364-373; the sequence is PQNTDSQADI. Basic and acidic residues-rich tracts occupy residues 374-394 and 410-427; these read HSQK…HDAV and HEPK…EEHG. Residues 429–443 show a composition bias toward polar residues; that stretch reads AVSSNQRPKSSQSDR. Phosphoserine; by PLK1 occurs at positions 483, 487, and 491. A coiled-coil region spans residues 583–723; sequence EQEMNSKRKF…NKKQQLLRDR (141 aa). The span at 785–800 shows a compositional bias: basic and acidic residues; sequence QERARLPKNQKAEAKT. The disordered stretch occupies residues 785–804; that stretch reads QERARLPKNQKAEAKTRMTM. A coiled-coil region spans residues 898–928; the sequence is RENLRPRKKALEDELEHKKEEQEMFFRMNEE. Positions 930–951 are disordered; sequence AGHPFPSNKPAKFYSFSSPEAS.

This sequence belongs to the protein kinase superfamily. STE Ser/Thr protein kinase family. STE20 subfamily. As to quaternary structure, homodimer. Autophosphorylates. Phosphorylated by plk1/plx1, suggesting the existence of a feedback loop with plk1/plx1. activation of the protein.

The protein localises to the cell membrane. The catalysed reaction is L-seryl-[protein] + ATP = O-phospho-L-seryl-[protein] + ADP + H(+). It catalyses the reaction L-threonyl-[protein] + ATP = O-phospho-L-threonyl-[protein] + ADP + H(+). Functionally, may act as a polo kinase kinase by mediating phosphorylation of plk1/plx1 and subsequent activation of plk1/plx1 during oocyte maturation. The polypeptide is Serine/threonine-protein kinase 10 (stk10) (Xenopus tropicalis (Western clawed frog)).